The chain runs to 213 residues: Type II restriction enzyme BamHI (213 aa).

Residues E77, D94, E111, and F112 each contribute to the Mg(2+) site. The active-site Proton acceptor is the E113.

Homodimer. Mg(2+) is required as a cofactor.

The catalysed reaction is Endonucleolytic cleavage of DNA to give specific double-stranded fragments with terminal 5'-phosphates.. In terms of biological role, a P subtype restriction enzyme that recognizes the double-stranded sequence 5'-GGATCC-3' and cleaves after G-1. The polypeptide is Type II restriction enzyme BamHI (Bacillus amyloliquefaciens (Bacillus velezensis)).